Here is a 179-residue protein sequence, read N- to C-terminus: Large ribosomal subunit protein uL6 (179 aa).

Belongs to the universal ribosomal protein uL6 family. Part of the 50S ribosomal subunit.

Its function is as follows. This protein binds to the 23S rRNA, and is important in its secondary structure. It is located near the subunit interface in the base of the L7/L12 stalk, and near the tRNA binding site of the peptidyltransferase center. In Geobacter metallireducens (strain ATCC 53774 / DSM 7210 / GS-15), this protein is Large ribosomal subunit protein uL6.